We begin with the raw amino-acid sequence, 424 residues long: GTPase Obg (424 aa).

The Obg domain maps to 1-158; the sequence is MFIDTAKILV…RMINLEIKLL (158 aa). One can recognise an OBG-type G domain in the interval 159-331; that stretch reads ADVGLIGFPN…LIKEVTRQLS (173 aa). GTP is bound by residues 165–172, 190–194, 212–215, 282–285, and 312–314; these read GFPNVGKS, FTTLK, DIPG, NKID, and SAA. Mg(2+) contacts are provided by Ser-172 and Thr-192. The OCT domain maps to 345–424; the sequence is RFMPEEKRFT…LNDFEFDFLL (80 aa).

It belongs to the TRAFAC class OBG-HflX-like GTPase superfamily. OBG GTPase family. In terms of assembly, monomer. Mg(2+) is required as a cofactor.

The protein resides in the cytoplasm. An essential GTPase which binds GTP, GDP and possibly (p)ppGpp with moderate affinity, with high nucleotide exchange rates and a fairly low GTP hydrolysis rate. Plays a role in control of the cell cycle, stress response, ribosome biogenesis and in those bacteria that undergo differentiation, in morphogenesis control. The protein is GTPase Obg of Clostridium novyi (strain NT).